The following is a 452-amino-acid chain: MSTPVNYLIPRQKDELHKAILAYFSASGLSNTGAALREELGVGDEFLDQNTMKKYEGVLEKKWTGVLRLQKKIMELESRLSSLQSELDSATPTSLTRRNVDPSSWLPRAPAKHVLTSHRNSINSVAFHPIFSVLASGSDDTTIKIWDWELGELERTVKGHTKAVLDLDFGGPKAGVLLVSCSSDLTIKLWDPNNEYKNIRTLTGHDHSVSAVRFIPSAAGEYLVSASRDKTLRVWEVATGYCVKTISGHSDWIRDVEPSHDGRWLLSAGGDQTTRLWDASTAEHKATFLGHEHVVNCCVFAPPSSYPHLATIAGLKKPPPATSSSEFIATGSRDKTIKLWDARGTLLKTLVGHDNWIRALAFHPAGKYLLSVSDDKTIRCWDLTQDGRCVKTVDEAHSHFATCLRWAPAPAKEQTNGEAKTNGIPKAGEKVINVRCVIATGSADMNVRVFAS.

The 33-residue stretch at 12-44 (QKDELHKAILAYFSASGLSNTGAALREELGVGD) folds into the LisH domain. Residues 64–91 (TGVLRLQKKIMELESRLSSLQSELDSAT) adopt a coiled-coil conformation. 8 WD repeats span residues 117–158 (SHRN…RTVK), 160–200 (HTKA…KNIR), 204–245 (GHDH…CVKT), 248–287 (GHSD…HKAT), 290–350 (GHEH…LKTL), 352–391 (GHDN…RCVK), 396–435 (AHSH…INVR), and 437–452 (VIAT…VFAS).

It belongs to the WD repeat LIS1/nudF family. Self-associates. Interacts with NDL1 and dynein.

The protein resides in the cytoplasm. Its subcellular location is the cytoskeleton. It is found in the spindle pole. Functionally, positively regulates the activity of the minus-end directed microtubule motor protein dynein. May enhance dynein-mediated microtubule sliding by targeting dynein to the microtubule plus end. Required for nuclear migration during vegetative growth as well as development. Required for retrograde early endosome (EE) transport from the hyphal tip. Required for localization of dynein to the mitotic spindle poles. Recruits additional proteins to the dynein complex at SPBs. The polypeptide is Nuclear distribution protein PAC1 (Tuber melanosporum (strain Mel28) (Perigord black truffle)).